We begin with the raw amino-acid sequence, 826 residues long: Disintegrin and metalloproteinase domain-containing protein 8 (826 aa).

An N-terminal signal peptide occupies residues Met1 to Ala16. The Extracellular segment spans residues Pro17–Ser658. 2 N-linked (GlcNAc...) asparagine glycosylation sites follow: Asn89 and Asn260. In terms of domain architecture, Peptidase M12B spans Arg196–Pro395. Cystine bridges form between Cys305–Cys390, Cys346–Cys374, Cys348–Cys357, Cys430–Cys452, Cys443–Cys449, Cys461–Cys481, Cys468–Cys498, Cys493–Cys503, Cys563–Cys615, Cys615–Cys625, Cys619–Cys631, and Cys633–Cys642. His329 provides a ligand contact to Zn(2+). The active site involves Glu330. Positions 333 and 339 each coordinate Zn(2+). In terms of domain architecture, Disintegrin spans Gly403–Asn489. N-linked (GlcNAc...) asparagine glycosylation occurs at Asn431. One can recognise an EGF-like domain in the interval Arg611–Val643. An N-linked (GlcNAc...) asparagine glycan is attached at Asn614. The chain crosses the membrane as a helical span at residues Leu659–Tyr683. The Cytoplasmic segment spans residues Arg684–Arg826. The interval Ser701 to Arg826 is disordered. Positions Pro733–Pro748 are enriched in pro residues. Low complexity predominate over residues Gly749–Pro763.

Interacts with FST3. It depends on Zn(2+) as a cofactor. In terms of tissue distribution, macrophages.

It localises to the membrane. Functionally, possible involvement in extravasation of leukocytes. This is Disintegrin and metalloproteinase domain-containing protein 8 (Adam8) from Mus musculus (Mouse).